The sequence spans 1016 residues: Coiled-coil domain-containing protein 57 (1016 aa).

Positions 1 to 503 (MLPLCSEREL…HGLLPGQEAQ (503 aa)) are centrosomal targeting domain. Coiled-coil stretches lie at residues 14–607 (LARK…PVKT), 676–700 (SEVD…KHLK), and 748–775 (VTHL…LLEM). 2 disordered regions span residues 500-519 (QEAQ…DSPS) and 549-573 (HLPP…DSTP). The interval 604-1016 (PVKTSVATAD…SRIRNYNLKD (413 aa)) is microtubule binding domain. Disordered regions lie at residues 781–921 (AEQG…LASS) and 933–1016 (GSSP…NLKD). 2 stretches are compositionally biased toward polar residues: residues 846 to 859 (QPHS…TNTP) and 934 to 945 (SSPSGVPSQDNS).

In terms of assembly, interacts with CEP63; the interaction is required for their location to proximal end of centrioles. Interacts with microtubules.

Its subcellular location is the cytoplasm. It localises to the cytoskeleton. The protein localises to the microtubule organizing center. The protein resides in the centrosome. It is found in the centriolar satellite. Its subcellular location is the centriole. It localises to the spindle. In terms of biological role, pleiotropic regulator of centriole duplication, mitosis, and ciliogenesis. Critical interface between centrosome and microtubule-mediated cellular processes. Centriole duplication protein required for recruitment of CEP63, CEP152, and PLK4 to the centrosome. Independent of its centrosomal targeting, localizes to and interacts with microtubules and regulates microtubule nucleation, stability, and mitotic progression. This chain is Coiled-coil domain-containing protein 57, found in Mus musculus (Mouse).